We begin with the raw amino-acid sequence, 365 residues long: tRNA N6-adenosine threonylcarbamoyltransferase (365 aa).

Residues His122 and His126 each coordinate Fe cation. Substrate-binding positions include 147-151 (LVSGG), Asp180, Gly193, and Asn293. Asp321 contributes to the Fe cation binding site. Positions 340–365 (PNEIDTAARPRWPLSERTPATPEHVS) are disordered.

It belongs to the KAE1 / TsaD family. Requires Fe(2+) as cofactor.

The protein resides in the cytoplasm. The enzyme catalyses L-threonylcarbamoyladenylate + adenosine(37) in tRNA = N(6)-L-threonylcarbamoyladenosine(37) in tRNA + AMP + H(+). In terms of biological role, required for the formation of a threonylcarbamoyl group on adenosine at position 37 (t(6)A37) in tRNAs that read codons beginning with adenine. Is involved in the transfer of the threonylcarbamoyl moiety of threonylcarbamoyl-AMP (TC-AMP) to the N6 group of A37, together with TsaE and TsaB. TsaD likely plays a direct catalytic role in this reaction. The protein is tRNA N6-adenosine threonylcarbamoyltransferase of Gluconobacter oxydans (strain 621H) (Gluconobacter suboxydans).